The following is a 496-amino-acid chain: Probable cytosol aminopeptidase (496 aa).

2 residues coordinate Mn(2+): K262 and D267. K274 is a catalytic residue. Residues D285, D344, and E346 each coordinate Mn(2+). R348 is an active-site residue.

This sequence belongs to the peptidase M17 family. Mn(2+) is required as a cofactor.

Its subcellular location is the cytoplasm. It catalyses the reaction Release of an N-terminal amino acid, Xaa-|-Yaa-, in which Xaa is preferably Leu, but may be other amino acids including Pro although not Arg or Lys, and Yaa may be Pro. Amino acid amides and methyl esters are also readily hydrolyzed, but rates on arylamides are exceedingly low.. The catalysed reaction is Release of an N-terminal amino acid, preferentially leucine, but not glutamic or aspartic acids.. Functionally, presumably involved in the processing and regular turnover of intracellular proteins. Catalyzes the removal of unsubstituted N-terminal amino acids from various peptides. The polypeptide is Probable cytosol aminopeptidase (Rhizobium etli (strain CIAT 652)).